Consider the following 125-residue polypeptide: uncharacterized protein (125 aa).

This is an uncharacterized protein from Aquifex aeolicus (strain VF5).